A 438-amino-acid polypeptide reads, in one-letter code: Aspartate--tRNA(Asp) ligase (438 aa).

E170 lines the L-aspartate pocket. The segment at 192 to 195 (QLYK) is aspartate. Residue R214 coordinates L-aspartate. ATP contacts are provided by residues 214 to 216 (RAE), 222 to 224 (RHL), and E361. E361 and S364 together coordinate Mg(2+). The L-aspartate site is built by S364 and R368. Residue 409 to 412 (GAER) participates in ATP binding.

This sequence belongs to the class-II aminoacyl-tRNA synthetase family. Type 2 subfamily. As to quaternary structure, homodimer. Mg(2+) is required as a cofactor.

It localises to the cytoplasm. The catalysed reaction is tRNA(Asp) + L-aspartate + ATP = L-aspartyl-tRNA(Asp) + AMP + diphosphate. Catalyzes the attachment of L-aspartate to tRNA(Asp) in a two-step reaction: L-aspartate is first activated by ATP to form Asp-AMP and then transferred to the acceptor end of tRNA(Asp). The sequence is that of Aspartate--tRNA(Asp) ligase from Pyrococcus horikoshii (strain ATCC 700860 / DSM 12428 / JCM 9974 / NBRC 100139 / OT-3).